Reading from the N-terminus, the 635-residue chain is Threonine--tRNA ligase (635 aa).

Residues 1–61 (MIKITLKDGK…HKDSSLEILT (61 aa)) form the TGS domain. A catalytic region spans residues 242–532 (DHRKLGKELD…LIEQYAGAFP (291 aa)). Zn(2+)-binding residues include cysteine 333, histidine 384, and histidine 509.

It belongs to the class-II aminoacyl-tRNA synthetase family. Homodimer. Zn(2+) is required as a cofactor.

Its subcellular location is the cytoplasm. It catalyses the reaction tRNA(Thr) + L-threonine + ATP = L-threonyl-tRNA(Thr) + AMP + diphosphate + H(+). In terms of biological role, catalyzes the attachment of threonine to tRNA(Thr) in a two-step reaction: L-threonine is first activated by ATP to form Thr-AMP and then transferred to the acceptor end of tRNA(Thr). Also edits incorrectly charged L-seryl-tRNA(Thr). This Clostridium botulinum (strain Okra / Type B1) protein is Threonine--tRNA ligase.